The sequence spans 154 residues: NADPH-dependent 7-cyano-7-deazaguanine reductase (154 aa).

The Thioimide intermediate role is filled by Cys52. Residue Asp59 is the Proton donor of the active site. Substrate is bound by residues 74–76 (VES) and 93–94 (HE).

This sequence belongs to the GTP cyclohydrolase I family. QueF type 1 subfamily.

The protein resides in the cytoplasm. It catalyses the reaction 7-aminomethyl-7-carbaguanine + 2 NADP(+) = 7-cyano-7-deazaguanine + 2 NADPH + 3 H(+). Its pathway is tRNA modification; tRNA-queuosine biosynthesis. Its function is as follows. Catalyzes the NADPH-dependent reduction of 7-cyano-7-deazaguanine (preQ0) to 7-aminomethyl-7-deazaguanine (preQ1). This chain is NADPH-dependent 7-cyano-7-deazaguanine reductase, found in Paracoccus denitrificans (strain Pd 1222).